The following is a 387-amino-acid chain: Carboxynorspermidine/carboxyspermidine decarboxylase (387 aa).

Lys51 carries the post-translational modification N6-(pyridoxal phosphate)lysine. Residues Glu248 and Asp284 each coordinate substrate.

Belongs to the Orn/Lys/Arg decarboxylase class-II family. NspC subfamily. In terms of assembly, homodimer. Pyridoxal 5'-phosphate serves as cofactor.

Its subcellular location is the cytoplasm. The catalysed reaction is carboxynorspermidine + H(+) = norspermidine + CO2. The enzyme catalyses carboxyspermidine + H(+) = spermidine + CO2. In terms of biological role, catalyzes the decarboxylation of carboxynorspermidine and carboxyspermidine. Essential for biofilm formation. This chain is Carboxynorspermidine/carboxyspermidine decarboxylase, found in Vibrio cholerae serotype O1 (strain ATCC 39315 / El Tor Inaba N16961).